Consider the following 815-residue polypeptide: Serotype-specific mannosyltransferase WbdA (815 aa).

Residues 1–374 form an alpha-(1-&gt;2)-mannosyltransferase region; the sequence is MSRAIIENAG…WANTAHLAID (374 aa). Residues 431 to 804 are alpha-(1-&gt;3)-mannosyltransferase; it reads KLLVDISVLA…WKQSAELLLK (374 aa).

This sequence belongs to the glycosyltransferase group 1 family. Glycosyltransferase 4 subfamily.

The protein localises to the cell inner membrane. Its pathway is bacterial outer membrane biogenesis; LPS O-antigen biosynthesis. In terms of biological role, mannosyltransferase involved in the biosynthesis of the repeat unit of the lipopolysaccharide (LPS) O-antigen region. This is Serotype-specific mannosyltransferase WbdA from Escherichia coli.